The sequence spans 207 residues: MEHQIITQNVYAPDTEAKLDVARKLFAQFDSNKNGTLDPSEVAGLIKTTFENMGVKDYSVTADDVKLYMKSVDVDNNGLVSYSEYEEYVIACLKKAGFDCEVKQKVKRSAKKRDAATEMKLDVARRLFAKYDSDKSGQLEEKEVYGVITETYKQMGMDYKPTEADVKLWMSMTDTDKNGTVSIVEYEDFVISGLKKAGFMVKEFTQA.

Position 1 is a blocked amino end (Met) (M1). EF-hand domains are found at residues 17–52 (AKLD…TFEN), 60–95 (VTAD…CLKK), 119–154 (MKLD…TYKQ), and 161–196 (PTEA…GLKK). Residues D30, N32, N34, T36, E41, D73, D75, N77, E84, D132, D134, S136, Q138, E143, D174, D176, N178, T180, and E185 each contribute to the Ca(2+) site.

Functionally, expected to play a crucial role in calcium-dependent regulation of ciliary movement. The polypeptide is 23 kDa calcium-binding protein (Tetrahymena thermophila).